Consider the following 315-residue polypeptide: Lipoyl synthase (315 aa).

Positions 63, 68, 74, 89, 93, 96, and 303 each coordinate [4Fe-4S] cluster. The region spanning 75 to 292 (FSHGTATFMI…EKKAYDMGFR (218 aa)) is the Radical SAM core domain.

It belongs to the radical SAM superfamily. Lipoyl synthase family. It depends on [4Fe-4S] cluster as a cofactor.

It localises to the cytoplasm. It catalyses the reaction [[Fe-S] cluster scaffold protein carrying a second [4Fe-4S](2+) cluster] + N(6)-octanoyl-L-lysyl-[protein] + 2 oxidized [2Fe-2S]-[ferredoxin] + 2 S-adenosyl-L-methionine + 4 H(+) = [[Fe-S] cluster scaffold protein] + N(6)-[(R)-dihydrolipoyl]-L-lysyl-[protein] + 4 Fe(3+) + 2 hydrogen sulfide + 2 5'-deoxyadenosine + 2 L-methionine + 2 reduced [2Fe-2S]-[ferredoxin]. It participates in protein modification; protein lipoylation via endogenous pathway; protein N(6)-(lipoyl)lysine from octanoyl-[acyl-carrier-protein]: step 2/2. Functionally, catalyzes the radical-mediated insertion of two sulfur atoms into the C-6 and C-8 positions of the octanoyl moiety bound to the lipoyl domains of lipoate-dependent enzymes, thereby converting the octanoylated domains into lipoylated derivatives. In Laribacter hongkongensis (strain HLHK9), this protein is Lipoyl synthase.